We begin with the raw amino-acid sequence, 685 residues long: Glycine--tRNA ligase beta subunit (685 aa).

It belongs to the class-II aminoacyl-tRNA synthetase family. As to quaternary structure, tetramer of two alpha and two beta subunits.

It localises to the cytoplasm. The enzyme catalyses tRNA(Gly) + glycine + ATP = glycyl-tRNA(Gly) + AMP + diphosphate. This chain is Glycine--tRNA ligase beta subunit, found in Leuconostoc mesenteroides subsp. mesenteroides (strain ATCC 8293 / DSM 20343 / BCRC 11652 / CCM 1803 / JCM 6124 / NCDO 523 / NBRC 100496 / NCIMB 8023 / NCTC 12954 / NRRL B-1118 / 37Y).